The primary structure comprises 104 residues: Iron-sulfur cluster assembly protein CyaY (104 aa).

It belongs to the frataxin family.

Its function is as follows. Involved in iron-sulfur (Fe-S) cluster assembly. May act as a regulator of Fe-S biogenesis. The chain is Iron-sulfur cluster assembly protein CyaY from Aeromonas salmonicida (strain A449).